We begin with the raw amino-acid sequence, 238 residues long: Probable transcriptional regulatory protein M6_Spy0297 (238 aa).

This sequence belongs to the TACO1 family. YeeN subfamily.

The protein localises to the cytoplasm. The protein is Probable transcriptional regulatory protein M6_Spy0297 of Streptococcus pyogenes serotype M6 (strain ATCC BAA-946 / MGAS10394).